Here is a 476-residue protein sequence, read N- to C-terminus: Aspartyl/glutamyl-tRNA(Asn/Gln) amidotransferase subunit B (476 aa).

The protein belongs to the GatB/GatE family. GatB subfamily. As to quaternary structure, heterotrimer of A, B and C subunits.

It catalyses the reaction L-glutamyl-tRNA(Gln) + L-glutamine + ATP + H2O = L-glutaminyl-tRNA(Gln) + L-glutamate + ADP + phosphate + H(+). The enzyme catalyses L-aspartyl-tRNA(Asn) + L-glutamine + ATP + H2O = L-asparaginyl-tRNA(Asn) + L-glutamate + ADP + phosphate + 2 H(+). Allows the formation of correctly charged Asn-tRNA(Asn) or Gln-tRNA(Gln) through the transamidation of misacylated Asp-tRNA(Asn) or Glu-tRNA(Gln) in organisms which lack either or both of asparaginyl-tRNA or glutaminyl-tRNA synthetases. The reaction takes place in the presence of glutamine and ATP through an activated phospho-Asp-tRNA(Asn) or phospho-Glu-tRNA(Gln). This is Aspartyl/glutamyl-tRNA(Asn/Gln) amidotransferase subunit B from Nitratidesulfovibrio vulgaris (strain ATCC 29579 / DSM 644 / CCUG 34227 / NCIMB 8303 / VKM B-1760 / Hildenborough) (Desulfovibrio vulgaris).